Here is a 151-residue protein sequence, read N- to C-terminus: Endoribonuclease YbeY (151 aa).

Residues His108, His112, and Asp118 each contribute to the Zn(2+) site.

This sequence belongs to the endoribonuclease YbeY family. Requires Zn(2+) as cofactor.

The protein resides in the cytoplasm. Its function is as follows. Single strand-specific metallo-endoribonuclease involved in late-stage 70S ribosome quality control and in maturation of the 3' terminus of the 16S rRNA. This chain is Endoribonuclease YbeY, found in Porphyromonas gingivalis (strain ATCC BAA-308 / W83).